We begin with the raw amino-acid sequence, 322 residues long: Putative MgpC-like protein MPN_367 (322 aa).

Over residues 1-48 the composition is skewed to low complexity; that stretch reads MVGSGAAGSASSLQGNGSNSSGLKSLLRSAPVSVPPSSTSNQTLSLSN. Disordered stretches follow at residues 1–59 and 118–145; these read MVGS…AVVS and DATSTNLPHAAGASQTGLGTGSPREPAL. The span at 120 to 134 shows a compositional bias: polar residues; sequence TSTNLPHAAGASQTG.

Belongs to the MgpC family.

The polypeptide is Putative MgpC-like protein MPN_367 (Mycoplasma pneumoniae (strain ATCC 29342 / M129 / Subtype 1) (Mycoplasmoides pneumoniae)).